Here is a 124-residue protein sequence, read N- to C-terminus: SPbeta prophage-derived uncharacterized protein YoqO (124 aa).

A run of 2 helical transmembrane segments spans residues 54-74 and 88-108; these read LVVI…LLSF and VIFI…ISIM.

It is found in the cell membrane. This chain is SPbeta prophage-derived uncharacterized protein YoqO (yoqO), found in Bacillus subtilis (strain 168).